Here is a 269-residue protein sequence, read N- to C-terminus: Monofunctional glycosyltransferase (269 aa).

The chain crosses the membrane as a helical span at residues 46-66 (ILLTILIIIALFIGIMYFLST).

This sequence belongs to the glycosyltransferase 51 family.

It is found in the cell membrane. It catalyses the reaction [GlcNAc-(1-&gt;4)-Mur2Ac(oyl-L-Ala-gamma-D-Glu-L-Lys-D-Ala-D-Ala)](n)-di-trans,octa-cis-undecaprenyl diphosphate + beta-D-GlcNAc-(1-&gt;4)-Mur2Ac(oyl-L-Ala-gamma-D-Glu-L-Lys-D-Ala-D-Ala)-di-trans,octa-cis-undecaprenyl diphosphate = [GlcNAc-(1-&gt;4)-Mur2Ac(oyl-L-Ala-gamma-D-Glu-L-Lys-D-Ala-D-Ala)](n+1)-di-trans,octa-cis-undecaprenyl diphosphate + di-trans,octa-cis-undecaprenyl diphosphate + H(+). It participates in cell wall biogenesis; peptidoglycan biosynthesis. In terms of biological role, peptidoglycan polymerase that catalyzes glycan chain elongation using lipid-linked disaccharide-pentapeptide as the substrate. This Staphylococcus aureus (strain Newman) protein is Monofunctional glycosyltransferase.